The sequence spans 707 residues: E3 ubiquitin-protein ligase Praja-2 (707 aa).

Residues 1-10 (MSQYTEKEPS) show a composition bias toward basic and acidic residues. 3 disordered regions span residues 1–32 (MSQY…QTIT), 72–120 (PKEN…PSIA), and 250–314 (QNGQ…VRPK). An N-acetylserine modification is found at S2. 2 stretches are compositionally biased toward polar residues: residues 74–83 (ENTSGSSSLD) and 109–119 (LNQSTESSPSI). A compositionally biased stretch (basic and acidic residues) spans 257–276 (RSSEDGVVRKRRQDDTDQGR). The span at 293 to 308 (EQNTSDRANHHGSSPE) shows a compositional bias: polar residues. Residues S306 and S320 each carry the phosphoserine modification. The residue at position 339 (S339) is a Phosphoserine; by PKA. Disordered stretches follow at residues 379 to 405 (RVTQ…QESR) and 424 to 493 (EDSS…QTSL). The span at 381 to 390 (TQRETERNRV) shows a compositional bias: basic and acidic residues. The residue at position 385 (T385) is a Phosphothreonine; by PKA. The segment covering 391–401 (TSENGATASGR) has biased composition (polar residues). A Phosphoserine modification is found at S430. The segment covering 465-481 (NDPELQSDSSGPEEENQ) has biased composition (acidic residues). Polar residues predominate over residues 482-491 (ELSLQEGEQT). Residues 530-707 (DGNNNLEDDS…PANDNAEEAP (178 aa)) form an interaction with PRKAR1A, PRKAR2A and PRKAR2B region. The tract at residues 549 to 569 (WSLFDGFADGLGVAEAISYVD) is mediates interaction with TBC1D31. The RING-type; atypical zinc finger occupies 633 to 674 (CPICCSEYIKDDIATELPCHHFFHKPCVSIWLQKSGTCPVCR). A compositionally biased stretch (low complexity) spans 685–701 (SAAASSDPDPDASPAND). A disordered region spans residues 685–707 (SAAASSDPDPDASPANDNAEEAP).

As to quaternary structure, binds ubiquitin-conjugating enzymes (E2s). In vitro, interacts with the ubiquitin-conjugating enzyme, UBE2D2. The phosphorylated form interacts with PRKAR1A, PRKAR2A and PRKAR2B. Binds the catalytic subunits of cAMP-dependent protein kinase. Interacts with MFHAS1. Interacts with TBC1D31; the interaction is direct and recruits PJA2 to centrosomes.

Its subcellular location is the cytoplasm. It is found in the cell membrane. The protein resides in the endoplasmic reticulum membrane. It localises to the golgi apparatus membrane. The protein localises to the synapse. Its subcellular location is the postsynaptic density. It is found in the cytoskeleton. The protein resides in the microtubule organizing center. It localises to the centrosome. It carries out the reaction S-ubiquitinyl-[E2 ubiquitin-conjugating enzyme]-L-cysteine + [acceptor protein]-L-lysine = [E2 ubiquitin-conjugating enzyme]-L-cysteine + N(6)-ubiquitinyl-[acceptor protein]-L-lysine.. Its pathway is protein modification; protein ubiquitination. Has E2-dependent E3 ubiquitin-protein ligase activity. Responsible for ubiquitination of cAMP-dependent protein kinase type I and type II-alpha/beta regulatory subunits and for targeting them for proteasomal degradation. Essential for PKA-mediated long-term memory processes. Through the ubiquitination of MFHAS1, positively regulates the TLR2 signaling pathway that leads to the activation of the downstream p38 and JNK MAP kinases and promotes the polarization of macrophages toward the pro-inflammatory M1 phenotype. Plays a role in ciliogenesis by ubiquitinating OFD1. The chain is E3 ubiquitin-protein ligase Praja-2 (Pja2) from Mus musculus (Mouse).